The sequence spans 341 residues: Uroporphyrinogen decarboxylase (341 aa).

Substrate contacts are provided by residues 25–29 (RQAGR), Phe44, Asp74, Tyr151, Ser206, and His318.

The protein belongs to the uroporphyrinogen decarboxylase family. As to quaternary structure, homodimer.

The protein localises to the cytoplasm. The enzyme catalyses uroporphyrinogen III + 4 H(+) = coproporphyrinogen III + 4 CO2. It participates in porphyrin-containing compound metabolism; protoporphyrin-IX biosynthesis; coproporphyrinogen-III from 5-aminolevulinate: step 4/4. Functionally, catalyzes the decarboxylation of four acetate groups of uroporphyrinogen-III to yield coproporphyrinogen-III. In Flavobacterium johnsoniae (strain ATCC 17061 / DSM 2064 / JCM 8514 / BCRC 14874 / CCUG 350202 / NBRC 14942 / NCIMB 11054 / UW101) (Cytophaga johnsonae), this protein is Uroporphyrinogen decarboxylase.